The chain runs to 97 residues: UPF0213 protein BLi00048/BL00536 (97 aa).

Positions 4–79 constitute a GIY-YIG domain; that stretch reads NSHYFYVLSC…KKLSRKNKER (76 aa).

This sequence belongs to the UPF0213 family.

This chain is UPF0213 protein BLi00048/BL00536, found in Bacillus licheniformis (strain ATCC 14580 / DSM 13 / JCM 2505 / CCUG 7422 / NBRC 12200 / NCIMB 9375 / NCTC 10341 / NRRL NRS-1264 / Gibson 46).